A 217-amino-acid polypeptide reads, in one-letter code: Ribosome maturation factor RimP (217 aa).

Belongs to the RimP family.

The protein localises to the cytoplasm. Functionally, required for maturation of 30S ribosomal subunits. The chain is Ribosome maturation factor RimP from Nocardia farcinica (strain IFM 10152).